The primary structure comprises 455 residues: Protein indeterminate-domain 7 (455 aa).

The interval 1 to 52 (MMMNRDILFHQQQQQQMEENMSNLTSASGDQASVSSGNRTETSGSNINQHHQ) is disordered. Polar residues predominate over residues 17-49 (MEENMSNLTSASGDQASVSSGNRTETSGSNINQ). S82 is modified (phosphoserine). C2H2-type zinc fingers lie at residues 92–114 (FICEVCNKGFQRDQNLQLHKRGH) and 134–164 (YVCPEPGCVHHHPSRALGDLTGIKKHFFRKH). The Nuclear localization signal motif lies at 156-163 (IKKHFFRK). A C2H2-type 2; degenerate zinc finger spans residues 169 to 192 (WKCEKCSKKYAVQSDWKAHAKTCG). Zn(2+) is bound by residues C171, C174, H187, C191, C198, C200, H213, and C217. Residues 196–219 (YKCDCGTLFSRRDSFITHRAFCDA) form a CCHC-type 2; atypical zinc finger. Positions 206–218 (RRDSFITHRAFCD) are SHR-binding. A disordered region spans residues 235–351 (QASNSPHHHH…PEEEERSSRS (117 aa)). 2 stretches are compositionally biased toward low complexity: residues 248-265 (QQNIGFSSSSQNIISNSN) and 288-299 (SSNPNPNGNNGN).

It localises to the nucleus. Functionally, probable transcription factor. The protein is Protein indeterminate-domain 7 of Arabidopsis thaliana (Mouse-ear cress).